The chain runs to 929 residues: uncharacterized protein (929 aa).

The interval 1-257 (MARKGKVNTL…SVLSSDDNDS (257 aa)) is disordered. The segment covering 23–34 (KQLENKILHSYE) has biased composition (basic and acidic residues). Acidic residues-rich tracts occupy residues 35-50 (EESA…DNDE), 59-75 (SEDD…DEED), 107-117 (LNEEDDSDDSV), 133-144 (DENELVDLDTLL), and 188-220 (SESE…DGEN). A phosphoserine mark is found at S251, S555, and S557. The interval 602–729 (DEMQAFEDEL…KADKKNHKLK (128 aa)) is disordered. The span at 605–619 (QAFEDELAGVPNEDD) shows a compositional bias: acidic residues. Positions 670 to 681 (NKPEMKEGQKKA) are enriched in basic and acidic residues. The segment covering 696–711 (ETNPWLQVPDQRTSSA) has biased composition (polar residues). Residues 712 to 729 (KKLDKNSSKADKKNHKLK) are compositionally biased toward basic and acidic residues. 3 positions are modified to phosphoserine: S758, S760, and S764. A compositionally biased stretch (basic and acidic residues) spans 805 to 820 (KEDWVQEDAPKEEDHS). Residues 805–843 (KEDWVQEDAPKEEDHSLPGWGSWGGVGVKQRKTKPKVKK) form a disordered region. Positions 833–843 (KQRKTKPKVKK) are enriched in basic residues.

The protein to yeast YML093w.

The protein localises to the nucleus. The protein resides in the nucleolus. This is an uncharacterized protein from Schizosaccharomyces pombe (strain 972 / ATCC 24843) (Fission yeast).